A 104-amino-acid chain; its full sequence is UPF0235 protein Sfri_2863 (104 aa).

Belongs to the UPF0235 family.

This Shewanella frigidimarina (strain NCIMB 400) protein is UPF0235 protein Sfri_2863.